Consider the following 434-residue polypeptide: 3-phosphoshikimate 1-carboxyvinyltransferase (434 aa).

The 3-phosphoshikimate site is built by lysine 22, serine 23, and arginine 27. Residue lysine 22 coordinates phosphoenolpyruvate. Positions 93 and 121 each coordinate phosphoenolpyruvate. 3-phosphoshikimate-binding residues include serine 168, serine 169, glutamine 170, serine 199, aspartate 320, and lysine 347. Glutamine 170 is a binding site for phosphoenolpyruvate. Aspartate 320 acts as the Proton acceptor in catalysis. Phosphoenolpyruvate-binding residues include arginine 351, arginine 395, and lysine 420.

The protein belongs to the EPSP synthase family. As to quaternary structure, monomer.

The protein resides in the cytoplasm. The catalysed reaction is 3-phosphoshikimate + phosphoenolpyruvate = 5-O-(1-carboxyvinyl)-3-phosphoshikimate + phosphate. It participates in metabolic intermediate biosynthesis; chorismate biosynthesis; chorismate from D-erythrose 4-phosphate and phosphoenolpyruvate: step 6/7. Catalyzes the transfer of the enolpyruvyl moiety of phosphoenolpyruvate (PEP) to the 5-hydroxyl of shikimate-3-phosphate (S3P) to produce enolpyruvyl shikimate-3-phosphate and inorganic phosphate. The polypeptide is 3-phosphoshikimate 1-carboxyvinyltransferase (Cupriavidus necator (strain ATCC 17699 / DSM 428 / KCTC 22496 / NCIMB 10442 / H16 / Stanier 337) (Ralstonia eutropha)).